The chain runs to 92 residues: Acylphosphatase (92 aa).

Residues 5–92 (RWHLLVSGKV…QEFTDFRTTH (88 aa)) enclose the Acylphosphatase-like domain. Active-site residues include Arg-20 and Asn-38.

Belongs to the acylphosphatase family.

The enzyme catalyses an acyl phosphate + H2O = a carboxylate + phosphate + H(+). This Marinobacter nauticus (strain ATCC 700491 / DSM 11845 / VT8) (Marinobacter aquaeolei) protein is Acylphosphatase (acyP).